Consider the following 317-residue polypeptide: mRNA 3'-end-processing protein yth-1 (317 aa).

The interval 1-20 is disordered; it reads MATTTQTTTNSLPSGAGGPQ. 5 C3H1-type zinc fingers span residues 51 to 78, 93 to 120, 121 to 149, 150 to 177, and 179 to 202; these read PADR…HVTA, GFGS…HEYN, LRKM…HIDP, LSRL…HFRR, and LCLY…HPRW. Residues 202 to 217 show a composition bias toward basic and acidic residues; the sequence is WTADKDMEKPRAKGEG. A disordered region spans residues 202-317; that stretch reads WTADKDMEKP…GRGGFRGKGH (116 aa). Residues 223-237 are compositionally biased toward low complexity; sequence QQQQQQQQQQHMGDA. Residues 253-288 show a composition bias toward basic and acidic residues; the sequence is YMDRERERDRDNREREMMMQGRDRDGGGHDRHKDRF. The segment covering 289–301 has biased composition (gly residues); it reads GGGGGGGGGGRGR. Basic residues predominate over residues 302–317; it reads GGWRGRGRGGFRGKGH.

This sequence belongs to the CPSF4/YTH1 family.

It localises to the nucleus. Its function is as follows. Component of the cleavage factor I (CF I) involved in pre-mRNA 3'-end processing. In Neurospora crassa (strain ATCC 24698 / 74-OR23-1A / CBS 708.71 / DSM 1257 / FGSC 987), this protein is mRNA 3'-end-processing protein yth-1 (yth-1).